A 475-amino-acid chain; its full sequence is tRNA-2-methylthio-N(6)-dimethylallyladenosine synthase (475 aa).

One can recognise an MTTase N-terminal domain in the interval 2-119; that stretch reads AKLHITTWGC…LPEMINQIRS (118 aa). 6 residues coordinate [4Fe-4S] cluster: cysteine 11, cysteine 48, cysteine 82, cysteine 156, cysteine 160, and cysteine 163. Residues 142–374 enclose the Radical SAM core domain; that stretch reads KAEGPTAFVS…QQRINHQAMQ (233 aa). The region spanning 377-440 is the TRAM domain; sequence RLMLGTEQRI…SNSLRGEVIR (64 aa).

Belongs to the methylthiotransferase family. MiaB subfamily. In terms of assembly, monomer. It depends on [4Fe-4S] cluster as a cofactor.

The protein localises to the cytoplasm. The enzyme catalyses N(6)-dimethylallyladenosine(37) in tRNA + (sulfur carrier)-SH + AH2 + 2 S-adenosyl-L-methionine = 2-methylsulfanyl-N(6)-dimethylallyladenosine(37) in tRNA + (sulfur carrier)-H + 5'-deoxyadenosine + L-methionine + A + S-adenosyl-L-homocysteine + 2 H(+). Functionally, catalyzes the methylthiolation of N6-(dimethylallyl)adenosine (i(6)A), leading to the formation of 2-methylthio-N6-(dimethylallyl)adenosine (ms(2)i(6)A) at position 37 in tRNAs that read codons beginning with uridine. The protein is tRNA-2-methylthio-N(6)-dimethylallyladenosine synthase of Haemophilus ducreyi (strain 35000HP / ATCC 700724).